A 163-amino-acid polypeptide reads, in one-letter code: Peptide deformylase (163 aa).

Fe cation-binding residues include cysteine 91 and histidine 133. Glutamate 134 is an active-site residue. Histidine 137 provides a ligand contact to Fe cation.

Belongs to the polypeptide deformylase family. It depends on Fe(2+) as a cofactor.

It catalyses the reaction N-terminal N-formyl-L-methionyl-[peptide] + H2O = N-terminal L-methionyl-[peptide] + formate. Its function is as follows. Removes the formyl group from the N-terminal Met of newly synthesized proteins. Requires at least a dipeptide for an efficient rate of reaction. N-terminal L-methionine is a prerequisite for activity but the enzyme has broad specificity at other positions. This chain is Peptide deformylase, found in Lachnoclostridium phytofermentans (strain ATCC 700394 / DSM 18823 / ISDg) (Clostridium phytofermentans).